The sequence spans 214 residues: Potassium-transporting ATPase KdpC subunit (214 aa).

The helical transmembrane segment at 17–37 (LWVITALIYPFSMIAIGQILF) threads the bilayer.

Belongs to the KdpC family. In terms of assembly, the system is composed of three essential subunits: KdpA, KdpB and KdpC.

Its subcellular location is the cell inner membrane. In terms of biological role, part of the high-affinity ATP-driven potassium transport (or Kdp) system, which catalyzes the hydrolysis of ATP coupled with the electrogenic transport of potassium into the cytoplasm. This subunit acts as a catalytic chaperone that increases the ATP-binding affinity of the ATP-hydrolyzing subunit KdpB by the formation of a transient KdpB/KdpC/ATP ternary complex. The sequence is that of Potassium-transporting ATPase KdpC subunit from Microcystis aeruginosa (strain NIES-843 / IAM M-2473).